The primary structure comprises 383 residues: Mannitol-1-phosphate 5-dehydrogenase (383 aa).

An NAD(+)-binding site is contributed by 3 to 14 (AVHFGAGNIGRG).

Belongs to the mannitol dehydrogenase family.

The catalysed reaction is D-mannitol 1-phosphate + NAD(+) = beta-D-fructose 6-phosphate + NADH + H(+). The chain is Mannitol-1-phosphate 5-dehydrogenase from Lacticaseibacillus casei (strain BL23) (Lactobacillus casei).